The sequence spans 216 residues: Probable transaldolase (216 aa).

The active-site Schiff-base intermediate with substrate is the lysine 84.

The protein belongs to the transaldolase family. Type 3B subfamily.

Its subcellular location is the cytoplasm. The catalysed reaction is D-sedoheptulose 7-phosphate + D-glyceraldehyde 3-phosphate = D-erythrose 4-phosphate + beta-D-fructose 6-phosphate. The protein operates within carbohydrate degradation; pentose phosphate pathway; D-glyceraldehyde 3-phosphate and beta-D-fructose 6-phosphate from D-ribose 5-phosphate and D-xylulose 5-phosphate (non-oxidative stage): step 2/3. Functionally, transaldolase is important for the balance of metabolites in the pentose-phosphate pathway. This chain is Probable transaldolase, found in Exiguobacterium sp. (strain ATCC BAA-1283 / AT1b).